The sequence spans 100 residues: Large ribosomal subunit protein bL21 (100 aa).

The protein belongs to the bacterial ribosomal protein bL21 family. Part of the 50S ribosomal subunit. Contacts protein L20.

Its function is as follows. This protein binds to 23S rRNA in the presence of protein L20. This is Large ribosomal subunit protein bL21 from Corynebacterium jeikeium (strain K411).